The chain runs to 88 residues: HssA/B-like protein 64 (88 aa).

The span at M1–F24 shows a compositional bias: low complexity. 2 disordered regions span residues M1–G25 and G45–C88. Gly residues predominate over residues A56–G66.

This sequence belongs to the hssA/B family.

In Dictyostelium discoideum (Social amoeba), this protein is HssA/B-like protein 64 (hssl64).